We begin with the raw amino-acid sequence, 408 residues long: Translation initiation factor 2 subunit gamma (408 aa).

The tr-type G domain occupies 4–201; the sequence is QSEINIGLVG…TIEERIKTPK (198 aa). The tract at residues 13-20 is G1; that stretch reads GHVDHGKT. Mg(2+) is bound by residues Asp-16, Thr-20, Gly-41, and Ser-43. 16 to 21 serves as a coordination point for GTP; the sequence is DHGKTT. The interval 41–45 is G2; it reads GISIR. Zn(2+) contacts are provided by Cys-56, Cys-59, Cys-71, and Cys-74. The G3 stretch occupies residues 88-91; it reads DAPG. Residues 144–147 and 179–181 contribute to the GTP site; these read NKID and SAQ. Positions 144-147 are G4; the sequence is NKID. Residues 179–181 form a G5 region; sequence SAQ.

This sequence belongs to the TRAFAC class translation factor GTPase superfamily. Classic translation factor GTPase family. EIF2G subfamily. As to quaternary structure, heterotrimer composed of an alpha, a beta and a gamma chain. Mg(2+) is required as a cofactor.

The enzyme catalyses GTP + H2O = GDP + phosphate + H(+). Functionally, eIF-2 functions in the early steps of protein synthesis by forming a ternary complex with GTP and initiator tRNA. The sequence is that of Translation initiation factor 2 subunit gamma from Methanothermobacter thermautotrophicus (strain ATCC 29096 / DSM 1053 / JCM 10044 / NBRC 100330 / Delta H) (Methanobacterium thermoautotrophicum).